The chain runs to 132 residues: UPF0719 inner membrane protein YjfL (132 aa).

The Periplasmic portion of the chain corresponds to 1 to 6 (MHILDS). Residues 7 to 27 (LLAFSAYFFIGVAMVIIFLFI) form a helical membrane-spanning segment. Over 28 to 46 (YSKITPHNEWQLIKNNNTA) the chain is Cytoplasmic. The chain crosses the membrane as a helical span at residues 47-67 (ASLAFSGTLLGYVIPLSSAAI). At 68–71 (NAVS) the chain is on the periplasmic side. The helical transmembrane segment at 72–92 (IPDYFAWGGIALVIQLLVFAG) threads the bilayer. The Cytoplasmic segment spans residues 93–109 (VRLYMPALSEKIINHNT). A helical transmembrane segment spans residues 110–130 (AAGMFMGTAALAGGIFNAACM). Topologically, residues 131–132 (TW) are periplasmic.

The protein belongs to the UPF0719 family.

It localises to the cell inner membrane. The protein is UPF0719 inner membrane protein YjfL (yjfL) of Escherichia coli O157:H7.